The sequence spans 316 residues: F-box protein At4g09920 (316 aa).

In terms of domain architecture, F-box spans M1–G47.

In Arabidopsis thaliana (Mouse-ear cress), this protein is F-box protein At4g09920.